Consider the following 301-residue polypeptide: Glycine--tRNA ligase alpha subunit (301 aa).

This sequence belongs to the class-II aminoacyl-tRNA synthetase family. In terms of assembly, tetramer of two alpha and two beta subunits.

The protein localises to the cytoplasm. It catalyses the reaction tRNA(Gly) + glycine + ATP = glycyl-tRNA(Gly) + AMP + diphosphate. The protein is Glycine--tRNA ligase alpha subunit of Glaesserella parasuis serovar 5 (strain SH0165) (Haemophilus parasuis).